Consider the following 359-residue polypeptide: Probable dual-specificity RNA methyltransferase RlmN (359 aa).

Catalysis depends on E91, which acts as the Proton acceptor. The Radical SAM core domain maps to 97–329; sequence QHYGHSVCVT…KKNGVNCVVR (233 aa). C104 and C340 form a disulfide bridge. 3 residues coordinate [4Fe-4S] cluster: C111, C115, and C118. S-adenosyl-L-methionine-binding positions include 163–164, S195, 218–220, and N296; these read GE and SLH. C340 (S-methylcysteine intermediate) is an active-site residue.

This sequence belongs to the radical SAM superfamily. RlmN family. The cofactor is [4Fe-4S] cluster.

The protein resides in the cytoplasm. It carries out the reaction adenosine(2503) in 23S rRNA + 2 reduced [2Fe-2S]-[ferredoxin] + 2 S-adenosyl-L-methionine = 2-methyladenosine(2503) in 23S rRNA + 5'-deoxyadenosine + L-methionine + 2 oxidized [2Fe-2S]-[ferredoxin] + S-adenosyl-L-homocysteine. The catalysed reaction is adenosine(37) in tRNA + 2 reduced [2Fe-2S]-[ferredoxin] + 2 S-adenosyl-L-methionine = 2-methyladenosine(37) in tRNA + 5'-deoxyadenosine + L-methionine + 2 oxidized [2Fe-2S]-[ferredoxin] + S-adenosyl-L-homocysteine. Specifically methylates position 2 of adenine 2503 in 23S rRNA and position 2 of adenine 37 in tRNAs. The polypeptide is Probable dual-specificity RNA methyltransferase RlmN (Streptococcus pyogenes serotype M18 (strain MGAS8232)).